Reading from the N-terminus, the 437-residue chain is Glutamate-1-semialdehyde 2,1-aminomutase (437 aa).

Lysine 273 is modified (N6-(pyridoxal phosphate)lysine).

This sequence belongs to the class-III pyridoxal-phosphate-dependent aminotransferase family. HemL subfamily. As to quaternary structure, homodimer. Pyridoxal 5'-phosphate is required as a cofactor.

The protein resides in the cytoplasm. The enzyme catalyses (S)-4-amino-5-oxopentanoate = 5-aminolevulinate. Its pathway is porphyrin-containing compound metabolism; protoporphyrin-IX biosynthesis; 5-aminolevulinate from L-glutamyl-tRNA(Glu): step 2/2. This Chlamydia felis (strain Fe/C-56) (Chlamydophila felis) protein is Glutamate-1-semialdehyde 2,1-aminomutase.